A 512-amino-acid chain; its full sequence is Pentatricopeptide repeat-containing protein At1g64583, mitochondrial (512 aa).

The transit peptide at 1 to 34 directs the protein to the mitochondrion; the sequence is MRRLIVTGIATSTAKGFRRVVNPNLLGGGAAARA. PPR repeat units follow at residues 70 to 104, 105 to 139, 140 to 174, 175 to 209, 210 to 244, 245 to 279, 280 to 314, 315 to 349, 350 to 384, 385 to 415, 420 to 454, and 455 to 489; these read SIVD…GISH, DLYS…GYEP, SIVT…GYEP, NVVV…GLGA, DVVT…SINP, DVVT…SVDP, NNVT…GCFP, NVVT…GFNA, DIFT…RVTP, DIIT…MRES, GIVA…GVKP, and DART…GIIC.

This sequence belongs to the PPR family. P subfamily.

It is found in the mitochondrion. The protein is Pentatricopeptide repeat-containing protein At1g64583, mitochondrial of Arabidopsis thaliana (Mouse-ear cress).